The sequence spans 236 residues: Large ribosomal subunit protein uL3 (236 aa).

2 disordered regions span residues 132-153 (SNRASHGNSRSHNVPGSIGMAQ) and 200-236 (KGGDVTVSPSIRSARPTNNGNVNAAAKGGAKSGKKGG). Positions 133–145 (NRASHGNSRSHNV) are enriched in polar residues. The residue at position 153 (glutamine 153) is an N5-methylglutamine. The span at 206 to 216 (VSPSIRSARPT) shows a compositional bias: polar residues. The span at 217–228 (NNGNVNAAAKGG) shows a compositional bias: low complexity.

The protein belongs to the universal ribosomal protein uL3 family. In terms of assembly, part of the 50S ribosomal subunit. Forms a cluster with proteins L14 and L19. Methylated by PrmB.

In terms of biological role, one of the primary rRNA binding proteins, it binds directly near the 3'-end of the 23S rRNA, where it nucleates assembly of the 50S subunit. The polypeptide is Large ribosomal subunit protein uL3 (Nitrosospira multiformis (strain ATCC 25196 / NCIMB 11849 / C 71)).